Consider the following 129-residue polypeptide: MAKQATRVRRRERKNILSGVVHINSTFNNTMVTITDAQGNAIAWSSAGAQGFKGSRKSTPFAAQVAAEDCARKAQEHGMRSLEVEVCGPGAGRESALRALQSAGFVITSIRDVTPIPHNGCRPRKRRRV.

It belongs to the universal ribosomal protein uS11 family. In terms of assembly, part of the 30S ribosomal subunit. Interacts with proteins S7 and S18. Binds to IF-3.

In terms of biological role, located on the platform of the 30S subunit, it bridges several disparate RNA helices of the 16S rRNA. Forms part of the Shine-Dalgarno cleft in the 70S ribosome. The polypeptide is Small ribosomal subunit protein uS11 (Bartonella quintana (strain Toulouse) (Rochalimaea quintana)).